Here is a 435-residue protein sequence, read N- to C-terminus: Glutamyl-tRNA reductase (435 aa).

Residues 49–52 (TCNR), Ser-109, 114–116 (ETQ), and Gln-120 each bind substrate. The active-site Nucleophile is Cys-50. 189-194 (GAGEMS) serves as a coordination point for NADP(+).

Belongs to the glutamyl-tRNA reductase family. In terms of assembly, homodimer.

It catalyses the reaction (S)-4-amino-5-oxopentanoate + tRNA(Glu) + NADP(+) = L-glutamyl-tRNA(Glu) + NADPH + H(+). It functions in the pathway porphyrin-containing compound metabolism; protoporphyrin-IX biosynthesis; 5-aminolevulinate from L-glutamyl-tRNA(Glu): step 1/2. Its function is as follows. Catalyzes the NADPH-dependent reduction of glutamyl-tRNA(Glu) to glutamate 1-semialdehyde (GSA). This Listeria monocytogenes serotype 4b (strain CLIP80459) protein is Glutamyl-tRNA reductase.